Reading from the N-terminus, the 885-residue chain is MQERYSPTAVEAAAQQDWQARDAYRVTEHARNADGTEKPKFYACSMLPYPSGKLHMGHVRNYTINDMMARQLRMRGYNVLMPMGWDAFGMPAENAAIKSKVPPAKWTYDNIAYMKKQMQAMGLAIDWSREMCACDPEYYKWNQWLFLKMLEKGIAYRKTQVVNWDPVDQTVLANEQVIDGRGWRSGALVEKREIPGYYLRITDYADELLDQVRSGLPGWPERVRAMQENWIGKSEGVRFAFPHTIAGADGQLIQDGRLYVFTTRADTIMGVTFCAVAPEHPLATHAAATNPELASFIEQCKLGGTTEAEIATREKAGMRTGLTVTHPLTGAPVDVWVGNYVLMSYGDGAVMGVPAHDERDFAFAKKYQLPIRQVVAHEGKAYSTDAWQEWYGDKQGGRTVNSGKYDGLPYAEAVDAIAADLAAQGLGEKQTTWRLRDWGISRQRYWGTPIPIIHCADCGPVPVPEQDLPVVLPDDLIPDGSGNPLAKNEAFLSCSCPRCGKPARRETDTMDTFVDSSWYFMRYTSPGNDQAMVDARNDYWMPMDQYIGGIEHAVLHLLYARFWTRVMRDLGLLKFDEPFTKLLCQGMVLNHIYSRKNAQGGIEYFWPEEVENLYDAKGAITGARLKSDGSDVNYGGVGTMSKSKNNGVDPQALIDTLGADTARLFVMFASPPEQTLEWSDSGVEGANRFLRRLWSHCHAHRDAVARGLAAGADWAQAPAPVKDLRREVYGLLKQADYDYQRIQYNTVVSACMKMLNAIDDAKLPEGAHADAARAETLGVLLRVLYPVVPHVTWLLWRELGYTHSLGDLLDAPWPHVDEAALVADEIELMLQVNGKLRGAIRVAAKASKADIEQIAAAQEEVARFLEGRPPKRVIVVPGKLVNVVG.

The short motif at 48-58 is the 'HIGH' region element; that stretch reads PYPSGKLHMGH. The 'KMSKS' region signature appears at 639-643; it reads TMSKS. ATP is bound at residue Lys-642.

It belongs to the class-I aminoacyl-tRNA synthetase family.

It is found in the cytoplasm. It catalyses the reaction tRNA(Leu) + L-leucine + ATP = L-leucyl-tRNA(Leu) + AMP + diphosphate. This is Leucine--tRNA ligase from Bordetella petrii (strain ATCC BAA-461 / DSM 12804 / CCUG 43448).